The sequence spans 168 residues: Thiosulfate dehydrogenase [quinone] small subunit (168 aa).

The chain crosses the membrane as a helical span at residues 6–26; that stretch reads IIGIIFAILVVGWILATGQWA.

As to quaternary structure, heterodimer of a large and a small subunit in a 2:2 stoichiometry. TQO may associate with the terminal oxidase formed by doxBCE. The N-terminus is blocked. In terms of processing, glycosylated.

The protein localises to the cell membrane. It catalyses the reaction 6-decylubiquinone + 2 thiosulfate = 6-decylubiquinol + tetrathionate. With respect to regulation, inhibited by sulfite, metabisulfite and dithonite. Functionally, TQO plays a role in sulfur oxidation and is proposed to couple sulfur oxidation to dioxygen reduction; caldariellaquinone or sulfolobus quinone seem to serve to transfer electrons to the electron transport chain terminal oxidase formed by DoxBCE. This Acidianus ambivalens (Desulfurolobus ambivalens) protein is Thiosulfate dehydrogenase [quinone] small subunit (doxA).